Here is a 492-residue protein sequence, read N- to C-terminus: Endoglycoceramidase I (492 aa).

An N-terminal signal peptide occupies residues 1–14 (MRKTVVAFAAAIAA). A lipid anchor (N-palmitoyl cysteine) is attached at Cys15. Cys15 is lipidated: S-diacylglycerol cysteine. Substrate-binding positions include Lys61, Asp62, 131 to 133 (HQD), and 213 to 214 (NE). The Proton donor role is filled by Glu214. A disulfide bridge links Cys224 with Cys229. Positions 265, 298, and 302 each coordinate substrate. A disulfide bond links Cys294 and Cys313. The Nucleophile role is filled by Glu339. Trp365 is a binding site for substrate. A disordered region spans residues 467–492 (NRPGSAGAEVPDGPIETSSSGSSGSS).

This sequence belongs to the glycosyl hydrolase 5 (cellulase A) family.

It localises to the secreted. The protein resides in the membrane. The catalysed reaction is an oligoglycosyl-(1-&gt;4)-beta-D-glucosyl-(1&lt;-&gt;1)-ceramide + H2O = an oligoglycosyl-(1-&gt;4)-D-glucose + an N-acyl-sphingoid base. It catalyses the reaction a ganglioside GM3 + H2O = N-acetyl-alpha-neuraminosyl-(2-&gt;3)-beta-D-galactosyl-(1-&gt;4)-D-glucose + an N-acyl-sphingoid base. The enzyme catalyses a ganglioside GM1 + H2O = beta-D-Gal-(1-&gt;3)-beta-D-GalNAc-(1-&gt;4)-[alpha-Neu5Ac-(2-&gt;3)]-beta-D-Gal-(1-&gt;4)-D-Glc + an N-acyl-sphingoid base. It carries out the reaction a ganglioside Fuc-GM1 + H2O = alpha-Fuc-(1-&gt;2)-beta-Gal-(1-&gt;3)-beta-GalNAc-(1-&gt;4)-[alpha-Neu5Ac-(2-&gt;3)]-beta-Gal-(1-&gt;4)-Glc + an N-acyl-sphingoid base. The catalysed reaction is a beta-D-galactosyl-(1-&gt;4)-beta-D-glucosyl-(1&lt;-&gt;1)-ceramide + H2O = lactose + an N-acyl-sphingoid base. In terms of biological role, hydrolyzes glycosphingolipids; exhibits broad substrate specificity including monosialodihexosylganglioside (GM3), monosialotetrahexosylganglioside (GM1), fucosyl-GM1, lactosylceramide, globotriosylceramide, globotetraosylceramide, ganglioside GD1a, and ganglioside GD1b. No activity towards glucosylceramide and galactosylceramide. This Rhodococcus hoagii (strain 103S) (Rhodococcus equi) protein is Endoglycoceramidase I.